A 360-amino-acid polypeptide reads, in one-letter code: Ferredoxin--NADP reductase (360 aa).

The FAD site is built by Thr-25, Glu-44, Gln-52, Tyr-57, Val-97, Phe-132, Asp-298, and Ser-339.

The protein belongs to the ferredoxin--NADP reductase type 2 family. As to quaternary structure, homodimer. FAD is required as a cofactor.

The enzyme catalyses 2 reduced [2Fe-2S]-[ferredoxin] + NADP(+) + H(+) = 2 oxidized [2Fe-2S]-[ferredoxin] + NADPH. In Chlorobaculum tepidum (strain ATCC 49652 / DSM 12025 / NBRC 103806 / TLS) (Chlorobium tepidum), this protein is Ferredoxin--NADP reductase.